The following is a 325-amino-acid chain: tRNA dimethylallyltransferase (325 aa).

21–28 (GPTASGKS) contacts ATP. 23–28 (TASGKS) contributes to the substrate binding site. The interaction with substrate tRNA stretch occupies residues 166–170 (QRLAR).

Belongs to the IPP transferase family. Monomer. Mg(2+) is required as a cofactor.

The catalysed reaction is adenosine(37) in tRNA + dimethylallyl diphosphate = N(6)-dimethylallyladenosine(37) in tRNA + diphosphate. Catalyzes the transfer of a dimethylallyl group onto the adenine at position 37 in tRNAs that read codons beginning with uridine, leading to the formation of N6-(dimethylallyl)adenosine (i(6)A). This is tRNA dimethylallyltransferase from Acidiphilium cryptum (strain JF-5).